Consider the following 69-residue polypeptide: Double-strand break reduction protein (69 aa).

In terms of biological role, helps to maintain the integrity of the chromosome by lowering the steady-state level of double strand breaks. This region of DNA acts as an antitoxin to toxin RalR, a DNase, but it seems to be sRNA RalA that has the antitoxin activity and not this putative protein. Therefore the identity of this as a protein-coding gene has been cast into doubt. This chain is Double-strand break reduction protein, found in Escherichia coli (strain K12).